A 116-amino-acid polypeptide reads, in one-letter code: Classical arabinogalactan protein 25 (116 aa).

Positions 1-28 are cleaved as a signal peptide; that stretch reads MAFSFLNKLLIIFIFIFISLSSSSPTIS. The segment at 40–95 is disordered; sequence LLPSPGDALPSDDGSGTIPSSPSPPDPDTNDGSYPDPLAFSPFASPPVSSPSPPPS. Low complexity-rich tracts occupy residues 50-59 and 69-82; these read SDDGSGTIPS and NDGS…FSPF. Pro residues predominate over residues 83 to 95; the sequence is ASPPVSSPSPPPS. Residue S89 is the site of GPI-anchor amidated serine attachment. The propeptide at 90 to 116 is removed in mature form; sequence PSPPPSLPSAGVLLISLIISSASFLAL.

The protein belongs to the classical AGP family. In terms of processing, O-glycosylated on the hydroxyproline residues.

It is found in the cell membrane. In terms of biological role, proteoglycan that seems to be implicated in diverse developmental roles such as differentiation, cell-cell recognition, embryogenesis and programmed cell death. The polypeptide is Classical arabinogalactan protein 25 (AGP25) (Arabidopsis thaliana (Mouse-ear cress)).